The sequence spans 739 residues: MPGKMVVILGASNILWIMFAASQAFKIETTPESRYLAQIGDSVSLTCSTTGCESPFFSWRTQIDSPLNGKVTNEGTTSTLTMNPVSFGNEHSYLCTATCESRKLEKGIQVEIYSFPKDPEIHLSGPLEAGKPITVKCSVADVYPFDRLEIDLLKGDHLMKSQEFLEDADRKSLETKSLEVTFTPVIEDIGKVLVCRAKLHIDEMDSVPTVRQAVKELQVYISPKNTVISVNPSTKLQEGGSVTMTCSSEGLPAPEIFWSKKLDNGNLQHLSGNATLTLIAMRMEDSGIYVCEGVNLIGKNRKEVELIVQEKPFTVEISPGPRIAAQIGDSVMLTCSVMGCESPSFSWRTQIDSPLSGKVRSEGTNSTLTLSPVSFENEHSYLCTVTCGHKKLEKGIQVELYSFPRDPEIEMSGGLVNGSSVTVSCKVPSVYPLDRLEIELLKGETILENIEFLEDTDMKSLENKSLEMTFIPTIEDTGKALVCQAKLHIDDMEFEPKQRQSTQTLYVNVAPRDTTVLVSPSSILEEGSSVNMTCLSQGFPAPKILWSRQLPNGELQPLSENATLTLISTKMEDSGVYLCEGINQAGRSRKEVELIIQVTPKDIKLTAFPSESVKEGDTVIISCTCGNVPETWIILKKKAETGDTVLKSIDGAYTIRKAQLKDAGVYECESKNKVGSQLRSLTLDVQGRENNKDYFSPELLVLYFASSLIIPAIGMIIYFARKANMKGSYSLVEAQKSKV.

The signal sequence occupies residues 1–24 (MPGKMVVILGASNILWIMFAASQA). 7 Ig-like C2-type domains span residues 25–105 (FKIE…RKLE), 109–212 (QVEI…TVRQ), 223–309 (PKNT…LIVQ), 312–399 (PFTV…IQVE), 408–506 (EIEM…QTLY), 511–595 (PRDT…VELI), and 600–684 (PKDI…LTLD). The Extracellular segment spans residues 25-698 (FKIETTPESR…ENNKDYFSPE (674 aa)). Cystine bridges form between Cys47–Cys95, Cys52–Cys99, Cys137–Cys195, Cys246–Cys291, and Cys335–Cys383. Residues Asn273, Asn365, Asn417, Asn463, Asn531, and Asn561 are each glycosylated (N-linked (GlcNAc...) asparagine). An intrachain disulfide couples Cys534 to Cys579. The helical transmembrane segment at 699–720 (LLVLYFASSLIIPAIGMIIYFA) threads the bilayer. The Cytoplasmic segment spans residues 721–739 (RKANMKGSYSLVEAQKSKV).

Post-translationally, cleaved by the metalloproteinase ADAM17 to generate the soluble form. In terms of processing, sialoglycoprotein. Ubiquitinated by TRIM65 via 'Lys-48'-linked ubiquitination; leading to proteasomal degradation. As to expression, expressed on inflamed vascular endothelium, as well as on macrophage-like and dendritic cell types in both normal and inflamed tissue.

The protein localises to the cell membrane. Its subcellular location is the secreted. Its function is as follows. Cell adhesion glycoprotein predominantly expressed on the surface of endothelial cells that plays an important role in immune surveillance and inflammation. Acts as a major regulator of leukocyte adhesion to the endothelium through interaction with different types of integrins. During inflammatory responses, binds ligands on the surface of activated endothelial cells to initiate the activation of calcium channels and the plasma membrane-associated small GTPase RAC1 leading to leukocyte transendothelial migration. Also serves as a quality-control checkpoint for entry into bone marrow by providing a 'don't-eat-me' stamping in the context of major histocompatibility complex (MHC) class-I presentation. The chain is Vascular cell adhesion protein 1 (VCAM1) from Homo sapiens (Human).